Reading from the N-terminus, the 85-residue chain is Follicular dendritic cell secreted peptide (85 aa).

A signal peptide spans 1 to 17 (MKKVLLLITAILAVAVG). The segment at 75 to 83 (SAPTTPLPS) is O-glycosylated at one site.

Post-translationally, O-glycosylated with core 1 or possibly core 8 glycans. As to expression, abundantly expressed in tonsil, lymph node, and trachea; strong expression in prostate; lower expression in thyroid, stomach, and colon.

The protein resides in the secreted. Functionally, can bind to the surface of B-lymphoma cells, but not T-lymphoma cells, consistent with a function as a secreted mediator acting upon B-cells. This Homo sapiens (Human) protein is Follicular dendritic cell secreted peptide (FDCSP).